The sequence spans 447 residues: N-succinylarginine dihydrolase (447 aa).

Residues Ala-19–Ser-28, Asn-110, and His-137–Arg-138 each bind substrate. Glu-174 is a catalytic residue. Residue Arg-212 coordinates substrate. The active site involves His-248. Residues Asp-250 and Asn-359 each coordinate substrate. The active-site Nucleophile is the Cys-365.

This sequence belongs to the succinylarginine dihydrolase family. In terms of assembly, homodimer.

The catalysed reaction is N(2)-succinyl-L-arginine + 2 H2O + 2 H(+) = N(2)-succinyl-L-ornithine + 2 NH4(+) + CO2. Its pathway is amino-acid degradation; L-arginine degradation via AST pathway; L-glutamate and succinate from L-arginine: step 2/5. Functionally, catalyzes the hydrolysis of N(2)-succinylarginine into N(2)-succinylornithine, ammonia and CO(2). This is N-succinylarginine dihydrolase from Salmonella gallinarum (strain 287/91 / NCTC 13346).